Reading from the N-terminus, the 113-residue chain is Large ribosomal subunit protein bL20c (113 aa).

This sequence belongs to the bacterial ribosomal protein bL20 family.

It is found in the plastid. Its subcellular location is the chloroplast. In terms of biological role, binds directly to 23S ribosomal RNA and is necessary for the in vitro assembly process of the 50S ribosomal subunit. It is not involved in the protein synthesizing functions of that subunit. The chain is Large ribosomal subunit protein bL20c from Staurastrum punctulatum (Green alga).